A 462-amino-acid chain; its full sequence is Retinoic acid receptor RXR-alpha (462 aa).

The interval 1–107 (MDTKHFLPLD…MNPVSSSEDI (107 aa)) is disordered. A modulating region spans residues 1-134 (MDTKHFLPLD…GNMASFTKHI (134 aa)). Lys4 participates in a covalent cross-link: Glycyl lysine isopeptide (Lys-Gly) (interchain with G-Cter in SUMO2). A compositionally biased stretch (polar residues) spans 11 to 24 (FSTQVNSSLTSPTG). A phosphoserine mark is found at Ser21 and Ser27. Residues 49 to 58 (SPISTLSSPI) are compositionally biased toward polar residues. Residues Ser56 and Ser70 each carry the phosphoserine; by MAPK8 and MAPK9 modification. The segment covering 78–104 (SVPTTPTLGFSTGSPQLSSPMNPVSSS) has biased composition (polar residues). At Thr82 the chain carries Phosphothreonine; by MAPK8 and MAPK9. Lys108 is covalently cross-linked (Glycyl lysine isopeptide (Lys-Gly) (interchain with G-Cter in SUMO)). At Ser129 the chain carries Phosphoserine. Zn(2+) contacts are provided by Cys135 and Cys138. An NR C4-type zinc finger spans residues 135 to 155 (CAICGDRSSGKHYGVYSCEGC). Positions 135–200 (CAICGDRSSG…RYQKCLAMGM (66 aa)) form a DNA-binding region, nuclear receptor. Lys145 bears the N6-acetyllysine; by EP300 mark. 2 residues coordinate Zn(2+): Cys152 and Cys155. The interval 160–165 (KRTVRK) is nuclear localization signal. Zn(2+) contacts are provided by Cys171, Cys177, Cys187, and Cys190. The NR C4-type zinc-finger motif lies at 171 to 195 (CRDNKDCLIDKRQRNRCQYCRYQKC). The hinge stretch occupies residues 201 to 224 (KREAVQEERQRGKDRNENEVESTS). Basic and acidic residues predominate over residues 206-218 (QEERQRGKDRNEN). The interval 206–228 (QEERQRGKDRNENEVESTSSANE) is disordered. In terms of domain architecture, NR LBD spans 227-458 (NEDMPVERIL…TFLMEMLEAP (232 aa)). Phosphoserine is present on Ser259. Ser260 carries the post-translational modification Phosphoserine; by MAPK8 and MAPK9. Arg316 and Ala327 together coordinate 9-cis-retinoate. The all-trans-retinoate site is built by Arg316 and Ala327. The interval 348–368 (RVLTELVSKMRDMQMDKTELG) is required for nuclear export.

It belongs to the nuclear hormone receptor family. NR2 subfamily. In terms of assembly, homodimer. Heterodimer (via C-terminus) with RARA; required for ligand-dependent retinoic acid receptor transcriptional activity; association with RARA is enhanced by pulsatile shear stress. Heterodimer with PPARA (via the leucine-like zipper in the LBD); the interaction is required for PPARA transcriptional activity. Heterodimerizes with PPARG. Heterodimerizes (via NR LBD) with RARB. Heterodimerizes with NR1H4; the heterodimerization enhances the binding affinity for LXXLL motifs from coactivators. Interacts with NCOA3 and NCOA6 coactivators. Interacts with coactivator FAM120B. Interacts with coactivator PELP1, SENP6, SFPQ, DNTTIP2 and RNF8. Interacts with PRMT2. Interacts with ASXL1. Interacts with BHLHE40/DEC1, BHLHE41/DEC2, NCOR1 and NCOR2. Interacts in a ligand-dependent fashion with MED1 and NCOA1. Interacts with VDR. Interacts with EP300; the interaction is decreased by 9-cis retinoic acid. Heterodimer (via C-terminus) with NR4A1 (via DNA-binding domain); DNA-binding of the heterodimer is enhanced by 9-cis retinoic acid. NR4A1 competes with EP300 for interaction with RXRA and thereby attenuates EP300 mediated acetylation of RXRA. In the absence of hormonal ligand, interacts with TACC1. Interacts ith IGFBP3. As to quaternary structure, (Microbial infection) Interacts (via the DNA binding domain) with HCV core protein; the interaction enhances the transcriptional activities of the RXRA/RARA and the RXRA/PPARA heterodimers. Post-translationally, acetylated by EP300; acetylation enhances DNA binding and transcriptional activity. In terms of processing, phosphorylated on serine and threonine residues mainly in the N-terminal modulating domain. Constitutively phosphorylated on Ser-21 in the presence or absence of ligand. Under stress conditions, hyperphosphorylated by activated JNK on Ser-56, Ser-70, Thr-82 and Ser-260. Phosphorylated on Ser-27, in vitro, by PKA. This phosphorylation is required for repression of cAMP-mediated transcriptional activity of RARA. Ubiquitinated by UBR5, leading to its degradation: UBR5 specifically recognizes and binds ligand-bound RXRA when it is not associated with coactivators (NCOAs). In presence of NCOAs, the UBR5-degron is not accessible, preventing its ubiquitination and degradation. Post-translationally, sumoylation negatively regulates transcriptional activity. Desumoylated specifically by SENP6. Expressed in lung fibroblasts (at protein level). Expressed in monocytes. Highly expressed in liver, also found in kidney and brain.

Its subcellular location is the nucleus. It is found in the cytoplasm. The protein resides in the mitochondrion. In terms of biological role, receptor for retinoic acid that acts as a transcription factor. Forms homo- or heterodimers with retinoic acid receptors (RARs) and binds to target response elements in response to their ligands, all-trans or 9-cis retinoic acid, to regulate gene expression in various biological processes. The RAR/RXR heterodimers bind to the retinoic acid response elements (RARE) composed of tandem 5'-AGGTCA-3' sites known as DR1-DR5 to regulate transcription. The high affinity ligand for retinoid X receptors (RXRs) is 9-cis retinoic acid. In the absence of ligand, the RXR-RAR heterodimers associate with a multiprotein complex containing transcription corepressors that induce histone deacetylation, chromatin condensation and transcriptional suppression. On ligand binding, the corepressors dissociate from the receptors and coactivators are recruited leading to transcriptional activation. Serves as a common heterodimeric partner for a number of nuclear receptors, such as RARA, RARB and PPARA. The RXRA/RARB heterodimer can act as a transcriptional repressor or transcriptional activator, depending on the RARE DNA element context. The RXRA/PPARA heterodimer is required for PPARA transcriptional activity on fatty acid oxidation genes such as ACOX1 and the P450 system genes. Together with RARA, positively regulates microRNA-10a expression, thereby inhibiting the GATA6/VCAM1 signaling response to pulsatile shear stress in vascular endothelial cells. Acts as an enhancer of RARA binding to RARE DNA element. May facilitate the nuclear import of heterodimerization partners such as VDR and NR4A1. Promotes myelin debris phagocytosis and remyelination by macrophages. Plays a role in the attenuation of the innate immune system in response to viral infections, possibly by negatively regulating the transcription of antiviral genes such as type I IFN genes. Involved in the regulation of calcium signaling by repressing ITPR2 gene expression, thereby controlling cellular senescence. The chain is Retinoic acid receptor RXR-alpha (RXRA) from Homo sapiens (Human).